The sequence spans 178 residues: Prion-like protein doppel (178 aa).

The signal sequence occupies residues 1 to 25; sequence MRKHLGGCWLAIVCVLLFSQLSSVK. A flexible tail region spans residues 27 to 50; the sequence is RGIKHRIKWNRKVLPSTSQVTEAH. Residues 51–154 form a globular region; the sequence is TAEIRPGAFI…KHCDFWLERG (104 aa). Cystine bridges form between C94/C147 and C108/C142. N-linked (GlcNAc...) asparagine glycosylation is found at N98 and N110. A cu(2+) binding region spans residues 124–141; sequence KQDNKLYQRVLWQLIREL. A lipid anchor (GPI-anchor amidated glycine) is attached at G154. The propeptide at 155–178 is removed in mature form; the sequence is AGLQVTLDQPMMLCLLVFIWFIVK.

This sequence belongs to the prion family. N-glycosylated. Post-translationally, O-glycosylated. In terms of tissue distribution, strongly expressed in testis. Detected at low levels in lymph node, spleen and ovary.

The protein localises to the cell membrane. In terms of biological role, required for normal acrosome reaction and for normal male fertility. Can bind Cu(2+). The polypeptide is Prion-like protein doppel (PRND) (Ovis aries (Sheep)).